Consider the following 1068-residue polypeptide: DNA-directed RNA polymerase subunit beta (1068 aa).

It belongs to the RNA polymerase beta chain family. In plastids the minimal PEP RNA polymerase catalytic core is composed of four subunits: alpha, beta, beta', and beta''. When a (nuclear-encoded) sigma factor is associated with the core the holoenzyme is formed, which can initiate transcription.

It localises to the plastid. The protein localises to the chloroplast. It catalyses the reaction RNA(n) + a ribonucleoside 5'-triphosphate = RNA(n+1) + diphosphate. Functionally, DNA-dependent RNA polymerase catalyzes the transcription of DNA into RNA using the four ribonucleoside triphosphates as substrates. This is DNA-directed RNA polymerase subunit beta from Staurastrum punctulatum (Green alga).